Reading from the N-terminus, the 343-residue chain is Probable dual-specificity RNA methyltransferase RlmN (343 aa).

E94 acts as the Proton acceptor in catalysis. The 231-residue stretch at 100 to 330 (YDSRVTVCVS…ATVRMSMGSD (231 aa)) folds into the Radical SAM core domain. The cysteines at positions 107 and 335 are disulfide-linked. 3 residues coordinate [4Fe-4S] cluster: C114, C118, and C121. S-adenosyl-L-methionine is bound by residues 161–162 (GE), S193, 216–218 (SLH), and N292. C335 functions as the S-methylcysteine intermediate in the catalytic mechanism.

This sequence belongs to the radical SAM superfamily. RlmN family. Requires [4Fe-4S] cluster as cofactor.

Its subcellular location is the cytoplasm. The catalysed reaction is adenosine(2503) in 23S rRNA + 2 reduced [2Fe-2S]-[ferredoxin] + 2 S-adenosyl-L-methionine = 2-methyladenosine(2503) in 23S rRNA + 5'-deoxyadenosine + L-methionine + 2 oxidized [2Fe-2S]-[ferredoxin] + S-adenosyl-L-homocysteine. It catalyses the reaction adenosine(37) in tRNA + 2 reduced [2Fe-2S]-[ferredoxin] + 2 S-adenosyl-L-methionine = 2-methyladenosine(37) in tRNA + 5'-deoxyadenosine + L-methionine + 2 oxidized [2Fe-2S]-[ferredoxin] + S-adenosyl-L-homocysteine. Functionally, specifically methylates position 2 of adenine 2503 in 23S rRNA and position 2 of adenine 37 in tRNAs. The protein is Probable dual-specificity RNA methyltransferase RlmN of Clostridioides difficile (strain 630) (Peptoclostridium difficile).